Here is a 467-residue protein sequence, read N- to C-terminus: Chromosomal replication initiator protein DnaA (467 aa).

The interval 1-80 (MTSELWHQCL…APRISLKIGS (80 aa)) is domain I, interacts with DnaA modulators. Positions 80 to 130 (SITGNSKGQQASKDSAVGATRTTAPSRPVIADVAPSGERNVTVEGAIKHES) are domain II. A domain III, AAA+ region region spans residues 131–347 (YLNPTFTFET…GALKLVIANA (217 aa)). Residues Gly175, Gly177, Lys178, and Thr179 each coordinate ATP. The domain IV, binds dsDNA stretch occupies residues 348-467 (HFTGQEITPA…YQNFMRMLTS (120 aa)).

Belongs to the DnaA family. In terms of assembly, oligomerizes as a right-handed, spiral filament on DNA at oriC.

It is found in the cytoplasm. Plays an essential role in the initiation and regulation of chromosomal replication. ATP-DnaA binds to the origin of replication (oriC) to initiate formation of the DNA replication initiation complex once per cell cycle. Binds the DnaA box (a 9 base pair repeat at the origin) and separates the double-stranded (ds)DNA. Forms a right-handed helical filament on oriC DNA; dsDNA binds to the exterior of the filament while single-stranded (ss)DNA is stabiized in the filament's interior. The ATP-DnaA-oriC complex binds and stabilizes one strand of the AT-rich DNA unwinding element (DUE), permitting loading of DNA polymerase. After initiation quickly degrades to an ADP-DnaA complex that is not apt for DNA replication. Binds acidic phospholipids. This chain is Chromosomal replication initiator protein DnaA, found in Hahella chejuensis (strain KCTC 2396).